Here is a 181-residue protein sequence, read N- to C-terminus: Oligoribonuclease (181 aa).

One can recognise an Exonuclease domain in the interval 8–171 (LIWVDLEMTG…DDIRESIAEL (164 aa)). The active site involves tyrosine 129.

It belongs to the oligoribonuclease family.

The protein localises to the cytoplasm. Functionally, 3'-to-5' exoribonuclease specific for small oligoribonucleotides. The sequence is that of Oligoribonuclease from Vibrio parahaemolyticus serotype O3:K6 (strain RIMD 2210633).